Here is a 1164-residue protein sequence, read N- to C-terminus: Hamartin (1164 aa).

Lys30 participates in a covalent cross-link: Glycyl lysine isopeptide (Lys-Gly) (interchain with G-Cter in ubiquitin). Residues 403–787 form a mediates interaction with WDR45B region; that stretch reads SDDYVHISLP…QIRQLQHDRE (385 aa). Residues 439–571 form a disordered region; that stretch reads LNDRGSEEPP…ADESPAGDRE (133 aa). Residues 474 to 487 show a composition bias toward basic and acidic residues; sequence EKDKEEAAISRELS. 5 positions are modified to phosphoserine: Ser487, Ser505, Ser511, Ser521, and Ser598. Residues 513-530 are compositionally biased toward polar residues; it reads PGSQRKTHSAASSSQGAS. The stretch at 721–997 forms a coiled coil; sequence RKVIKAAALE…AAEERLDCCN (277 aa). The interval 1006–1085 is disordered; the sequence is GHNEEASGHN…TTVGSLPSSK (80 aa). The span at 1007 to 1020 shows a compositional bias: basic and acidic residues; the sequence is HNEEASGHNGETKT. Residues 1073–1085 show a composition bias toward polar residues; sequence SIPTTVGSLPSSK. Residue Ser1100 is modified to Phosphoserine. Residues 1131–1164 form a disordered region; it reads IPLNLDGPHPSPPTPDSVGQLHIMDYNETHHEHS. Positions 1155–1164 are enriched in basic and acidic residues; sequence DYNETHHEHS.

In terms of assembly, component of the TSC-TBC complex (also named Rhebulator complex), composed of 2 molecules of TSC1, 2 molecules of TSC2 and 1 molecule of TBC1D7. Probably forms a complex composed of chaperones HSP90 and HSP70, co-chaperones STIP1/HOP, CDC37, PPP5C, PTGES3/p23, TSC1 and client protein TSC2. Forms a complex composed of chaperones HSP90 and HSP70, co-chaperones CDC37, PPP5C, TSC1 and client protein TSC2, CDK4, AKT, RAF1 and NR3C1; this complex does not contain co-chaperones STIP1/HOP and PTGES3/p23. Forms a complex containing HSP90AA1, TSC1 and TSC2; TSC1 is required to recruit TCS2 to the complex. Interacts (via C-terminus) with the closed form of HSP90AA1 (via the middle domain and TPR repeat-binding motif). Interacts with DOCK7. Interacts with FBXW5. Interacts with WDR45B. Interacts with RPAP3 and URI1. Phosphorylation at Ser-505 does not affect interaction with TSC2. Post-translationally, 'Lys-63'-linked ubiquitinated at Lys-30 by PELI1; the ubiquitination promotes TSC1/TSC2 complex stability. In terms of tissue distribution, highly expressed in skeletal muscle, followed by heart, brain, placenta, pancreas, lung, liver and kidney. Also expressed in embryonic kidney cells.

It localises to the lysosome membrane. Its subcellular location is the cytoplasm. The protein localises to the cytosol. Its function is as follows. Non-catalytic component of the TSC-TBC complex, a multiprotein complex that acts as a negative regulator of the canonical mTORC1 complex, an evolutionarily conserved central nutrient sensor that stimulates anabolic reactions and macromolecule biosynthesis to promote cellular biomass generation and growth. The TSC-TBC complex acts as a GTPase-activating protein (GAP) for the small GTPase RHEB, a direct activator of the protein kinase activity of mTORC1. In absence of nutrients, the TSC-TBC complex inhibits mTORC1, thereby preventing phosphorylation of ribosomal protein S6 kinase (RPS6KB1 and RPS6KB2) and EIF4EBP1 (4E-BP1) by the mTORC1 signaling. The TSC-TBC complex is inactivated in response to nutrients, relieving inhibition of mTORC1. Within the TSC-TBC complex, TSC1 stabilizes TSC2 and prevents TSC2 self-aggregation. Acts as a tumor suppressor. Involved in microtubule-mediated protein transport via its ability to regulate mTORC1 signaling. Also acts as a co-chaperone for HSP90AA1 facilitating HSP90AA1 chaperoning of protein clients such as kinases, TSC2 and glucocorticoid receptor NR3C1. Increases ATP binding to HSP90AA1 and inhibits HSP90AA1 ATPase activity. Competes with the activating co-chaperone AHSA1 for binding to HSP90AA1, thereby providing a reciprocal regulatory mechanism for chaperoning of client proteins. Recruits TSC2 to HSP90AA1 and stabilizes TSC2 by preventing the interaction between TSC2 and ubiquitin ligase HERC1. This is Hamartin from Homo sapiens (Human).